Reading from the N-terminus, the 288-residue chain is Coenzyme gamma-F420-2:alpha-L-glutamate ligase (288 aa).

The 187-residue stretch at 101–287 (IKLLAKNKIK…IAEALVRYAK (187 aa)) folds into the ATP-grasp domain. Residues lysine 139, 173–186 (QEFI…LYRD), and arginine 202 each bind ATP. Mn(2+)-binding residues include aspartate 245, glutamate 257, and asparagine 259.

This sequence belongs to the RimK family. CofF subfamily. In terms of assembly, monomer. Mn(2+) serves as cofactor.

It catalyses the reaction oxidized coenzyme F420-2 + L-glutamate + ATP = oxidized coenzyme alpha-F420-3 + ADP + phosphate + H(+). The protein operates within cofactor biosynthesis; coenzyme F420 biosynthesis. Inhibited by KCl. In terms of biological role, catalyzes the ATP-dependent addition of one alpha-linked L-glutamate molecule to coenzyme gamma-F420-2, producing alpha-F420-3, the major form of coenzyme F420 found in M.jannaschii. Thus, caps the gamma-polyglutamate tail of coenzyme F420 with a terminal alpha-linked glutamate. Prefers ATP to other purine nucleotide triphosphates; GTP gives about 25% of the activity observed with ATP. Cannot catalyze the addition of the following amino acids or analogs: D-glutamate, beta-glutamate, L-aspartate, L-glutamine, L-alpha-aminoadipate, or D,L-2-amino-4-phosphono-butyrate. The protein is Coenzyme gamma-F420-2:alpha-L-glutamate ligase (cofF) of Methanocaldococcus jannaschii (strain ATCC 43067 / DSM 2661 / JAL-1 / JCM 10045 / NBRC 100440) (Methanococcus jannaschii).